The following is a 102-amino-acid chain: Flagellar hook-basal body complex protein FliE (102 aa).

Belongs to the FliE family.

It localises to the bacterial flagellum basal body. In Halalkalibacterium halodurans (strain ATCC BAA-125 / DSM 18197 / FERM 7344 / JCM 9153 / C-125) (Bacillus halodurans), this protein is Flagellar hook-basal body complex protein FliE.